The sequence spans 407 residues: Imidazolonepropionase (407 aa).

Fe(3+) is bound by residues H75 and H77. Zn(2+) contacts are provided by H75 and H77. R84, Y142, and H169 together coordinate 4-imidazolone-5-propanoate. Y142 contributes to the N-formimidoyl-L-glutamate binding site. Fe(3+) is bound at residue H232. H232 provides a ligand contact to Zn(2+). Q235 provides a ligand contact to 4-imidazolone-5-propanoate. Fe(3+) is bound at residue D306. Position 306 (D306) interacts with Zn(2+). 2 residues coordinate N-formimidoyl-L-glutamate: N308 and G310. Residue T311 coordinates 4-imidazolone-5-propanoate.

It belongs to the metallo-dependent hydrolases superfamily. HutI family. Zn(2+) is required as a cofactor. The cofactor is Fe(3+).

It is found in the cytoplasm. It carries out the reaction 4-imidazolone-5-propanoate + H2O = N-formimidoyl-L-glutamate. Its pathway is amino-acid degradation; L-histidine degradation into L-glutamate; N-formimidoyl-L-glutamate from L-histidine: step 3/3. In terms of biological role, catalyzes the hydrolytic cleavage of the carbon-nitrogen bond in imidazolone-5-propanoate to yield N-formimidoyl-L-glutamate. It is the third step in the universal histidine degradation pathway. The chain is Imidazolonepropionase from Rhodococcus jostii (strain RHA1).